The sequence spans 786 residues: Tyrosine-protein kinase Btk (786 aa).

A disordered region spans residues 1 to 23 (MMGTKHRNSHVNGSIKSSSSLRS). Residues 14–23 (SIKSSSSLRS) are compositionally biased toward low complexity. The region spanning 41-184 (DVVKSGSMVK…WIRAIRQVCE (144 aa)) is the PH domain. The segment at 187-223 (NTPKSYRYHPGLWSGKKWSCCKGLSRTTFGCRAAAHW) adopts a Btk-type zinc-finger fold. Zn(2+) contacts are provided by His195, Cys206, Cys207, and Cys217. The span at 226 to 240 (ANNNPSNGSSPAQNS) shows a compositional bias: low complexity. Residues 226–301 (ANNNPSNGSS…TPTSLQPQSS (76 aa)) form a disordered region. The span at 241-260 (TRSISPNSSTTNSQFSLQHN) shows a compositional bias: polar residues. Residues 264 to 290 (SLGGGVGGGLGGGGSLGLGGGGGGGGS) show a composition bias toward gly residues. Residues 291-301 (CTPTSLQPQSS) show a composition bias toward polar residues. The SH3 domain maps to 342-402 (HFVKLVVALY…PSNYVKPKAL (61 aa)). The 94-residue stretch at 410 to 503 (WYVGDMSRQR…GLACRLKSSP (94 aa)) folds into the SH2 domain. Residues 526–779 (LMLMEELGSG…FRVLMDQLAL (254 aa)) form the Protein kinase domain. Residues 532–540 (LGSGQFGVV) and Lys554 each bind ATP. Asp647 functions as the Proton acceptor in the catalytic mechanism. Tyr677 is modified (phosphotyrosine; by autocatalysis).

Belongs to the protein kinase superfamily. Tyr protein kinase family. TEC subfamily. Zn(2+) serves as cofactor. As to expression, ring canals in the egg chambers and imaginal disks of third-instar larvae.

The enzyme catalyses L-tyrosyl-[protein] + ATP = O-phospho-L-tyrosyl-[protein] + ADP + H(+). In terms of biological role, required for proper ring canal development. Also required for the development of male genitalia and for adult survival. The protein is Tyrosine-protein kinase Btk of Drosophila melanogaster (Fruit fly).